The following is a 235-amino-acid chain: Large ribosomal subunit protein uL1 (235 aa).

The tract at residues 1 to 22 (MSKNSKAYRAAAEKVDRSNPYT) is disordered.

It belongs to the universal ribosomal protein uL1 family. Part of the 50S ribosomal subunit.

In terms of biological role, binds directly to 23S rRNA. The L1 stalk is quite mobile in the ribosome, and is involved in E site tRNA release. Functionally, protein L1 is also a translational repressor protein, it controls the translation of the L11 operon by binding to its mRNA. The polypeptide is Large ribosomal subunit protein uL1 (Mycobacterium ulcerans (strain Agy99)).